Consider the following 63-residue polypeptide: 2-hydroxymuconate tautomerase (63 aa).

Residue P2 is the Proton acceptor; via imino nitrogen of the active site.

This sequence belongs to the 4-oxalocrotonate tautomerase family. In terms of assembly, homohexamer.

It catalyses the reaction (2Z,4E)-2-hydroxyhexa-2,4-dienedioate = (3E)-2-oxohex-3-enedioate. It functions in the pathway aromatic compound metabolism; salicylate degradation. Catalyzes the ketonization of 2-hydroxymuconate stereoselectively to yield 2-oxo-3-hexenedioate. This is 2-hydroxymuconate tautomerase (tdnL) from Pseudomonas putida (Arthrobacter siderocapsulatus).